A 256-amino-acid polypeptide reads, in one-letter code: Indole-3-glycerol phosphate synthase (256 aa).

The protein belongs to the TrpC family.

The enzyme catalyses 1-(2-carboxyphenylamino)-1-deoxy-D-ribulose 5-phosphate + H(+) = (1S,2R)-1-C-(indol-3-yl)glycerol 3-phosphate + CO2 + H2O. The protein operates within amino-acid biosynthesis; L-tryptophan biosynthesis; L-tryptophan from chorismate: step 4/5. The chain is Indole-3-glycerol phosphate synthase from Chlorobaculum tepidum (strain ATCC 49652 / DSM 12025 / NBRC 103806 / TLS) (Chlorobium tepidum).